Reading from the N-terminus, the 292-residue chain is Small ribosomal subunit biogenesis GTPase RsgA (292 aa).

A CP-type G domain is found at 64–221 (RSELFRPAVA…LVDTPGFSSL (158 aa)). GTP-binding positions include 113–116 (NKMD) and 164–172 (GPSGVGKST). Zn(2+)-binding residues include cysteine 245, cysteine 250, histidine 252, and cysteine 258.

It belongs to the TRAFAC class YlqF/YawG GTPase family. RsgA subfamily. As to quaternary structure, monomer. Associates with 30S ribosomal subunit, binds 16S rRNA. Requires Zn(2+) as cofactor.

It localises to the cytoplasm. Its function is as follows. One of several proteins that assist in the late maturation steps of the functional core of the 30S ribosomal subunit. Helps release RbfA from mature subunits. May play a role in the assembly of ribosomal proteins into the subunit. Circularly permuted GTPase that catalyzes slow GTP hydrolysis, GTPase activity is stimulated by the 30S ribosomal subunit. This is Small ribosomal subunit biogenesis GTPase RsgA from Clostridium botulinum (strain Kyoto / Type A2).